Consider the following 469-residue polypeptide: Trigger factor (469 aa).

The PPIase FKBP-type domain maps to 165–250 (GDCVTIDYLG…VKAISKPDEL (86 aa)). The segment covering 439–460 (EYDESDLTEKKPEKKKGVEKTP) has biased composition (basic and acidic residues). Residues 439–469 (EYDESDLTEKKPEKKKGVEKTPIRKKAPKKG) form a disordered region.

This sequence belongs to the FKBP-type PPIase family. Tig subfamily.

The protein resides in the cytoplasm. The catalysed reaction is [protein]-peptidylproline (omega=180) = [protein]-peptidylproline (omega=0). Involved in protein export. Acts as a chaperone by maintaining the newly synthesized protein in an open conformation. Functions as a peptidyl-prolyl cis-trans isomerase. The polypeptide is Trigger factor (Bartonella quintana (strain Toulouse) (Rochalimaea quintana)).